Here is a 183-residue protein sequence, read N- to C-terminus: Nucleoside triphosphate pyrophosphatase (183 aa).

Residue aspartate 71 is the Proton acceptor of the active site.

This sequence belongs to the Maf family. A divalent metal cation serves as cofactor.

It localises to the cytoplasm. It carries out the reaction a ribonucleoside 5'-triphosphate + H2O = a ribonucleoside 5'-phosphate + diphosphate + H(+). The enzyme catalyses a 2'-deoxyribonucleoside 5'-triphosphate + H2O = a 2'-deoxyribonucleoside 5'-phosphate + diphosphate + H(+). Nucleoside triphosphate pyrophosphatase. May have a dual role in cell division arrest and in preventing the incorporation of modified nucleotides into cellular nucleic acids. In Campylobacter jejuni subsp. jejuni serotype O:2 (strain ATCC 700819 / NCTC 11168), this protein is Nucleoside triphosphate pyrophosphatase.